A 782-amino-acid chain; its full sequence is MDRVLSRADKERLLELLKLPRQLWGDFGRMQQAYKQQSLLLHPDKGGSHALMQELNSLWGTFKTEVYNLRMNLGGTGFQGSPPRTAERGTEESGHSPLHDDYWSFSYGSKYFTREWNDFFRKWDPSYQSPPKTAESSEQPDLFCYEEPLLSPNPSSPTDTPAHTAGRRRNPCVAEPDDSISPDPPRTPVSRKRPRPAGATGGGGGGVHANGGSVFGHPTGGTSTPAHPPPYHSQGGSESMGGSDSSGFAEGSFRSDPRCESENESYSQSCSQSSFNATPPKKAREDPAPSDFPSSLTGYLSHAIYSNKTFPAFLVYSTKEKCKQLYDTIGKFRPEFKCLVHYEEGGMLFFLTMTKHRVSAVKNYCSKLCSVSFLMCKAVTKPMECYQVVTAAPFQLITENKPGLHQFEFTDEPEEQKAVDWIMVADFALENNLDDPLLIMGYYLDFAKEVPSCIKCSKEETRLQIHWKNHRKHAENADLFLNCKAQKTICQQAADGVLASRRLKLVECTRSQLLKERLQQSLLRLKELGSSDALLYLAGVAWYQCLLEDFPQTLFKMLKLLTENVPKRRNILFRGPVNSGKTGLAAALISLLGGKSLNINCPADKLAFELGVAQDQFVVCFEDVKGQIALNKQLQPGMGVANLDNLRDYLDGSVKVNLEKKHSNKRSQLFPPCVCTMNEYLLPQTVWARFHMVLDFTCKPHLAQSLEKCEFLQRERIIQSGDTLALLLIWNFTSDVFDPDIQGLVKEVRDQFASECSYSLFCDILCNVQEGDDPLKDICEYS.

Met-1 bears the N-acetylmethionine; by host mark. The 64-residue stretch at 12–75 folds into the J domain; sequence RLLELLKLPR…VYNLRMNLGG (64 aa). Disordered regions lie at residues 74 to 97 and 145 to 291; these read GGTGFQGSPPRTAERGTEESGHSP and YEEP…APSD. Positions 85–97 are enriched in basic and acidic residues; it reads TAERGTEESGHSP. Positions 142–146 match the LXCXE motif motif; sequence LFCYE. Low complexity predominate over residues 148–161; that stretch reads PLLSPNPSSPTDTP. The segment covering 199–209 has biased composition (gly residues); that stretch reads ATGGGGGGVHA. 2 stretches are compositionally biased toward low complexity: residues 233–247 and 264–274; these read SQGGSESMGGSDSSG and ESYSQSCSQSS. Thr-278 bears the Phosphothreonine; by host mark. Positions 279-286 match the Nuclear localization signal motif; the sequence is PPKKARED. Residues 293-407 constitute a DNA-binding region (T-ag OBD); sequence PSSLTGYLSH…TENKPGLHQF (115 aa). A T-ag D1-type zinc finger spans residues 416-510; the sequence is QKAVDWIMVA…RRLKLVECTR (95 aa). Residues Cys-453, Cys-456, His-466, and His-470 each contribute to the Zn(2+) site. The 161-residue stretch at 549 to 709 folds into the SF3 helicase domain; the sequence is DFPQTLFKML…PHLAQSLEKC (161 aa). Residue 575 to 582 coordinates ATP; it reads GPVNSGKT.

In terms of assembly, forms homohexamers in the presence of ATP. Interacts with host HDAC1. Interacts (via LXCXE domain) with host RB1; the interaction induces the aberrant dissociation of RB1-E2F1 complex thereby disrupting RB1's activity. Interacts (via LXCXE domain) with host pRB-related proteins RBL1 and RBL2. Interacts (via C-terminus) with host TOP1 and POLA1 allowing DNA replication. Interacts with host preinitiation complex components TBP, TFIIA and TFIID to regulate transcription initiation. Mg(2+) is required as a cofactor. In terms of processing, phosphorylated on both serine and threonine residues. Small t antigen inhibits the dephosphorylation by the AC form of PP2A. O-Glycosylated near the C-terminal region. Post-translationally, acetylated by CBP in a TP53-dependent manner.

It localises to the host nucleus. It carries out the reaction Couples ATP hydrolysis with the unwinding of duplex DNA by translocating in the 3'-5' direction.. The enzyme catalyses ATP + H2O = ADP + phosphate + H(+). In terms of biological role, isoform large T antigen is a key early protein essential for both driving viral replication and inducing cellular transformation. Plays a role in viral genome replication by driving entry of quiescent cells into the cell cycle and by autoregulating the synthesis of viral early mRNA. Displays highly oncogenic activities by corrupting the host cellular checkpoint mechanisms that guard cell division and the transcription, replication, and repair of DNA. Participates in the modulation of cellular gene expression preceeding viral DNA replication. This step involves binding to host key cell cycle regulators retinoblastoma protein RB1/pRb and TP53. Induces the disassembly of host E2F1 transcription factors from RB1, thus promoting transcriptional activation of E2F1-regulated S-phase genes. Inhibits host TP53 binding to DNA, abrogating the ability of TP53 to stimulate gene expression. Plays the role of a TFIID-associated factor (TAF) in transcription initiation for all three RNA polymerases, by stabilizing the TBP-TFIIA complex on promoters. Initiates viral DNA replication and unwinding via interactions with the viral origin of replication. Binds two adjacent sites in the SV40 origin. The replication fork movement is facilitated by Large T antigen helicase activity. Has processive 3'-5' DNA helicase activity which requires a short 3' single-stranded region and ATP. Activates the transcription of viral late mRNA, through host TBP and TFIIA stabilization. Interferes with histone deacetylation mediated by HDAC1, leading to activation of transcription. The protein is Large T antigen of Mus musculus (Mouse).